We begin with the raw amino-acid sequence, 1729 residues long: Zinc finger CCCH domain-containing protein 13 (1729 aa).

2 disordered regions span residues Met-1–Thr-40 and Cys-57–Ile-156. The span at Val-10–Arg-23 shows a compositional bias: polar residues. The C3H1-type zinc-finger motif lies at Ser-36–Ser-64. Ser-64 and Ser-77 each carry phosphoserine. Over residues Arg-76–Glu-136 the composition is skewed to basic and acidic residues. Positions His-162–Glu-196 form a coiled coil. Lys-179 is covalently cross-linked (Glycyl lysine isopeptide (Lys-Gly) (interchain with G-Cter in SUMO2)). The span at Gln-182–Ile-193 shows a compositional bias: basic and acidic residues. Disordered stretches follow at residues Gln-182–Val-528 and Asp-581–Asp-1527. Ser-198, Ser-207, Ser-209, and Ser-211 each carry phosphoserine. Residues Ser-204–Arg-213 are compositionally biased toward low complexity. The segment covering Lys-214 to Ser-224 has biased composition (basic residues). Position 242 is a phosphoserine (Ser-242). The segment covering Leu-245 to Asn-254 has biased composition (polar residues). A Phosphothreonine modification is found at Thr-263. Residue Ser-265 is modified to Phosphoserine. Basic and acidic residues predominate over residues Lys-283–Arg-315. Residues Ser-316, Ser-318, Ser-324, and Ser-327 each carry the phosphoserine modification. Residues Gln-321–Ser-345 show a composition bias toward low complexity. A phosphothreonine mark is found at Thr-353 and Thr-363. The span at Tyr-358–Arg-368 shows a compositional bias: polar residues. Residues Ser-369, Ser-371, and Ser-380 each carry the phosphoserine modification. Composition is skewed to basic and acidic residues over residues Pro-393–Val-528 and Asp-581–Ser-636. Over residues Thr-639 to His-654 the composition is skewed to polar residues. A compositionally biased stretch (basic and acidic residues) spans Asp-655–Arg-701. Residue Ser-704 is modified to Phosphoserine. A coiled-coil region spans residues Ile-706–Glu-865. The span at Gly-710 to Lys-897 shows a compositional bias: basic and acidic residues. Ser-907, Ser-909, Ser-913, Ser-921, Ser-924, Ser-929, Ser-949, Ser-951, and Ser-953 each carry phosphoserine. The segment covering His-920 to Arg-938 has biased composition (basic and acidic residues). The span at Leu-957–Lys-1035 shows a compositional bias: basic and acidic residues. Thr-958 carries the post-translational modification Phosphothreonine. Positions Lys-1036 to Lys-1046 are enriched in basic residues. The segment covering Lys-1047–Ser-1065 has biased composition (basic and acidic residues). Phosphoserine is present on residues Ser-1069, Ser-1086, Ser-1090, and Ser-1093. Over residues Lys-1072 to Ser-1086 the composition is skewed to basic residues. Thr-1109 carries the post-translational modification Phosphothreonine. 2 stretches are compositionally biased toward basic and acidic residues: residues Ile-1114–Asn-1137 and Pro-1149–His-1159. Composition is skewed to low complexity over residues Thr-1160–Leu-1176 and Ala-1184–Ser-1218. A compositionally biased stretch (basic and acidic residues) spans Ala-1228 to Arg-1253. Ser-1256, Ser-1259, Ser-1273, and Ser-1275 each carry phosphoserine. Positions Ser-1278–Ser-1288 are enriched in basic and acidic residues. Ser-1295 is subject to Phosphoserine. 2 stretches are compositionally biased toward basic and acidic residues: residues Gly-1296–Val-1351 and Asp-1359–Phe-1440. Residues Ser-1427, Ser-1443, Ser-1447, Ser-1467, Ser-1470, Ser-1499, and Ser-1526 each carry the phosphoserine modification. Basic and acidic residues-rich tracts occupy residues Ser-1447 to Leu-1482 and Asp-1490 to Ser-1499.

It belongs to the ZC3H13 family. In terms of assembly, component of the WMM complex, a N6-methyltransferase complex composed of a catalytic subcomplex, named MAC, and of an associated subcomplex, named MACOM. The MAC subcomplex is composed of METTL3 and METTL14. The MACOM subcomplex is composed of WTAP, ZC3H13, CBLL1/HAKAI, VIRMA, and, in some cases of RBM15 (RBM15 or RBM15B). Also a component of a MACOM-like complex, named WTAP complex, composed of WTAP, ZC3H13, CBLL1/HAKAI, VIRMA, RBM15, BCLAF1 and THRAP3.

It is found in the nucleus speckle. It localises to the nucleus. The protein localises to the nucleoplasm. In terms of biological role, associated component of the WMM complex, a complex that mediates N6-methyladenosine (m6A) methylation of RNAs, a modification that plays a role in the efficiency of mRNA splicing and RNA processing. Acts as a key regulator of m6A methylation by promoting m6A methylation of mRNAs at the 3'-UTR. Controls embryonic stem cells (ESCs) pluripotency via its role in m6A methylation. In the WMM complex, anchors component of the MACOM subcomplex in the nucleus. Also required for bridging WTAP to the RNA-binding component RBM15 (RBM15 or RBM15B). The sequence is that of Zinc finger CCCH domain-containing protein 13 from Mus musculus (Mouse).